The following is a 467-amino-acid chain: MFYDEAKIFVKAGNGGNGAVSFHREKYIPRGGPDGGDGGRGGNVYLRVDPSLNTLLPFSYQRQFRAEDGQPGQGNNKNGRDGADLYIDVPPGTVVYDEATGAVLGDLLEPGEVLLVARGGFGGRGNQHFATPSRQAPRFAEKGEPGEERWLRLELKLLADVGLVGLPNAGKSTLLAAVSAARPKIADYPFTTLEPMLGVVSVPGREGGTFVLADLPGLIAGASRGAGLGHEFLRHVERTRLLIHVLDGSGGLEGRDPLEDFHTINAELAAYSASLAGKPQIVAVNKMDLPEAQANWPRIARALDELGYTAYPISAATGQGVGELIRATWERLQQLPRPERVAPPLRSHRVYTLDRSQERWEAIRLSPHHFALRGPKIERLTLMTDFSNPEAAERYQRLLARWGISRRLLALGIQPGDIVHVAGRELVWEPELAEAEQTRPRRRLTKRERLLKRAGLLEEPEEEIGEQ.

Residues 1-158 (MFYDEAKIFV…RWLRLELKLL (158 aa)) enclose the Obg domain. Positions 159–333 (ADVGLVGLPN…LIRATWERLQ (175 aa)) constitute an OBG-type G domain. Residues 165-172 (GLPNAGKS), 190-194 (FTTLE), 214-217 (DLPG), 285-288 (NKMD), and 314-316 (SAA) contribute to the GTP site. Residues serine 172 and threonine 192 each contribute to the Mg(2+) site. Residues 352–430 (TLDRSQERWE…VAGRELVWEP (79 aa)) enclose the OCT domain.

The protein belongs to the TRAFAC class OBG-HflX-like GTPase superfamily. OBG GTPase family. Monomer. It depends on Mg(2+) as a cofactor.

It localises to the cytoplasm. In terms of biological role, an essential GTPase which binds GTP, GDP and possibly (p)ppGpp with moderate affinity, with high nucleotide exchange rates and a fairly low GTP hydrolysis rate. Plays a role in control of the cell cycle, stress response, ribosome biogenesis and in those bacteria that undergo differentiation, in morphogenesis control. This is GTPase Obg from Thermomicrobium roseum (strain ATCC 27502 / DSM 5159 / P-2).